We begin with the raw amino-acid sequence, 207 residues long: uncharacterized protein (207 aa).

It belongs to the flavoredoxin family. The cofactor is FMN.

This is an uncharacterized protein from Bacillus subtilis (strain 168).